The following is a 301-amino-acid chain: Ras-related GTP-binding protein A (301 aa).

Residues 9-16 (GRSESGKT), 57-61 (DCGGQ), and 122-125 (HKMD) contribute to the GTP site.

It belongs to the GTR/RAG GTP-binding protein family.

The protein localises to the cytoplasm. Its subcellular location is the nucleus. It is found in the lysosome. Its function is as follows. Guanine nucleotide-binding protein that plays a crucial role in the cellular response to amino acid availability through regulation of the TOR signaling cascade. This is Ras-related GTP-binding protein A (ragA) from Dictyostelium discoideum (Social amoeba).